The sequence spans 458 residues: Argininosuccinate lyase (458 aa).

This sequence belongs to the lyase 1 family. Argininosuccinate lyase subfamily.

The protein resides in the cytoplasm. It catalyses the reaction 2-(N(omega)-L-arginino)succinate = fumarate + L-arginine. It participates in amino-acid biosynthesis; L-arginine biosynthesis; L-arginine from L-ornithine and carbamoyl phosphate: step 3/3. This Pseudoalteromonas atlantica (strain T6c / ATCC BAA-1087) protein is Argininosuccinate lyase.